Consider the following 357-residue polypeptide: 4-hydroxy-3-methylbut-2-en-1-yl diphosphate synthase (flavodoxin) (357 aa).

4 residues coordinate [4Fe-4S] cluster: cysteine 265, cysteine 268, cysteine 300, and glutamate 307.

This sequence belongs to the IspG family. Homodimer. It depends on [4Fe-4S] cluster as a cofactor.

It catalyses the reaction (2E)-4-hydroxy-3-methylbut-2-enyl diphosphate + oxidized [flavodoxin] + H2O + 2 H(+) = 2-C-methyl-D-erythritol 2,4-cyclic diphosphate + reduced [flavodoxin]. The protein operates within isoprenoid biosynthesis; isopentenyl diphosphate biosynthesis via DXP pathway; isopentenyl diphosphate from 1-deoxy-D-xylulose 5-phosphate: step 5/6. In terms of biological role, converts 2C-methyl-D-erythritol 2,4-cyclodiphosphate (ME-2,4cPP) into 1-hydroxy-2-methyl-2-(E)-butenyl 4-diphosphate. The chain is 4-hydroxy-3-methylbut-2-en-1-yl diphosphate synthase (flavodoxin) from Aquifex aeolicus (strain VF5).